Reading from the N-terminus, the 185-residue chain is Ribosome-recycling factor (185 aa).

Belongs to the RRF family.

The protein resides in the cytoplasm. Its function is as follows. Responsible for the release of ribosomes from messenger RNA at the termination of protein biosynthesis. May increase the efficiency of translation by recycling ribosomes from one round of translation to another. The sequence is that of Ribosome-recycling factor from Kineococcus radiotolerans (strain ATCC BAA-149 / DSM 14245 / SRS30216).